We begin with the raw amino-acid sequence, 602 residues long: Oligoendopeptidase F, chromosomal (602 aa).

Residue His-388 coordinates Zn(2+). The active site involves Glu-389. 2 residues coordinate Zn(2+): His-392 and His-395.

It belongs to the peptidase M3B family. It depends on Zn(2+) as a cofactor.

Its function is as follows. Hydrolyzes peptides containing between 7 and 17 amino acids with a rather wide specificity. The chain is Oligoendopeptidase F, chromosomal (pepF2) from Lactococcus lactis subsp. cremoris (Streptococcus cremoris).